Here is a 434-residue protein sequence, read N- to C-terminus: Forkhead box protein A2-A (434 aa).

Positions 149–243 (KPPYSYISLI…ENGCYLRRQK (95 aa)) form a DNA-binding region, fork-head. A compositionally biased stretch (basic and acidic residues) spans 249-262 (KKPSLREGGGKKLS). Disordered stretches follow at residues 249–339 (KKPS…QSHL) and 408–434 (SGLE…MNSS). Composition is skewed to low complexity over residues 263–291 (EGAS…SSSP) and 317–333 (ASQA…VLSH). Over residues 408 to 422 (SGLESSPITSDTSYY) the composition is skewed to polar residues.

As to expression, at gastrula stage, expressed in both the anterior and posterior endoderm, with endodermal expression persisting into early tailbud stages. Expression is absent in gastrula stage ectoderm. During tailbud stages, expressed in the pharyngeal region, the neural floor plate, the midbrain, hindbrain and in cranial neural crest cells. Expressed in the foregut of hatching larvae. In tadpoles, expressed in the pharyngeal pouches and in other anterior endodermal regions. Within the tadpole nervous system, expressed in the neural floor plate, at high levels in the ventral midbrain and hindbrain, and at lower levels in the spinal cord. Expressed in the adult lung and brain.

It is found in the nucleus. Functionally, acts as a transcriptional activator during early development, limiting the extent of mesoderm formation in the gastrula. Binds to DNA via the target sequence 5'-GT[AC]AACA-3', with 5'-GTAAACA-3' being the preferred binding site. The chain is Forkhead box protein A2-A (foxa2-a) from Xenopus laevis (African clawed frog).